A 399-amino-acid polypeptide reads, in one-letter code: P2X purinoceptor 1 (399 aa).

At 1–28 (MARRLQDELSAFFFEYDTPRMVLVRNKK) the chain is on the cytoplasmic side. Residues 29–50 (VGVIFRLIQLVVLVYVIGWVFV) traverse the membrane as a helical segment. The Extracellular portion of the chain corresponds to 51–338 (YEKGYQTSSD…IPTMTTIGSG (288 aa)). CTP contacts are provided by Lys68, Lys70, and Lys140. Position 70 (Lys70) interacts with ATP. Cystine bridges form between Cys117–Cys165, Cys126–Cys149, and Cys132–Cys159. Asn153 and Asn184 each carry an N-linked (GlcNAc...) asparagine glycan. Thr186 serves as a coordination point for CTP. Residue Thr186 coordinates ATP. The N-linked (GlcNAc...) asparagine glycan is linked to Asn210. Disulfide bonds link Cys217/Cys227 and Cys261/Cys270. ATP-binding residues include Ser286, Asn290, and Arg292. 2 residues coordinate CTP: Asn290 and Arg292. Asn300 carries an N-linked (GlcNAc...) asparagine glycan. Position 309 (Lys309) interacts with CTP. Lys309 is an ATP binding site. The pore-forming motif stretch occupies residues 331-338 (TMTTIGSG). The helical transmembrane segment at 339–358 (IGIFGVATVLCDLLLLHILP) threads the bilayer. Residues 359–399 (KRHYYKQKKFKYAEDMGPGEGEHDPVATSSTLGLQENMRTS) lie on the Cytoplasmic side of the membrane. The disordered stretch occupies residues 374 to 399 (MGPGEGEHDPVATSSTLGLQENMRTS). Polar residues predominate over residues 385–399 (ATSSTLGLQENMRTS). Residues Ser387 and Ser388 each carry the phosphoserine modification. Thr389 bears the Phosphothreonine mark.

This sequence belongs to the P2X receptor family. In terms of assembly, functional P2XRs are organized as homomeric and heteromeric trimers. Homotrimer. Forms heterodimer with P2RX2. Forms heterodimer with P2RX4. Forms heterodimer with P2RX5. High levels in vas deferens and urinary bladder. Lower extent in spinal cord, coeliac ganglion, lung and spleen (probably in the smooth muscle part of both organs).

The protein localises to the cell membrane. It carries out the reaction Ca(2+)(in) = Ca(2+)(out). The enzyme catalyses K(+)(in) = K(+)(out). It catalyses the reaction Na(+)(in) = Na(+)(out). With respect to regulation, activated by low concentrations of ATP (&lt;1 uM). Undergoes rapid desensitisation. Sensitives to the ATP agonist:alpha/beta-methylene-ATP. Modulated by cholesterol. ATP-gated nonselective transmembrane cation channel permeable to potassium, sodium and with relatively high calcium permeability. Furthermore, CTP functions as a weak affinity agonist for P2RX1. Plays a role a role in urogenital, immune and cardiovascular function. Specifically, plays an important role in neurogenic contraction of smooth muscle of the vas deferens, and therefore is essential for normal male reproductive function. In addition, contributes to smooth muscle contractions of the urinary bladder. On platelets, contributes to platelet activation and aggregation and thereby, also to thrombosis. On neutrophils, it is involved in chemotaxis and in mitigating the activation of circulating cells. The protein is P2X purinoceptor 1 (P2rx1) of Rattus norvegicus (Rat).